Reading from the N-terminus, the 70-residue chain is Venom antimicrobial peptide-6 (70 aa).

Residues 1–23 (MKSQTFFLLFLVVFLLAITQSEA) form the signal peptide. Position 36 is a phenylalanine amide (F36). Positions 40–70 (SLRDMDTMKYLYDPSLSAADLKTLQKLMENY) are excised as a propeptide.

Belongs to the non-disulfide-bridged peptide (NDBP) superfamily. Short antimicrobial peptide (group 4) family. Expressed by the venom gland.

It is found in the secreted. The protein resides in the target cell membrane. In terms of biological role, amphipathic peptide that exhibits extensive cytolytic activities against both prokaryotic and eukaryotic cells. Is more potent against Gram-positive bacteria (lethal concentration (LC)=0.25-2.9 uM) than against Gram-negative bacteria (LC=6.2-&gt;50 uM), and fungi ((LC)=14.1-&gt;50 uM). Shows hemolytic activity against rabbit erythrocytes (37.7% of inhibition at 6.25 uM) and cytolysis against rat dorsal root ganglions. In vivo, intravenous injection into mice tail provokes uncomfortable symptoms with a death rate of 12.5%. This chain is Venom antimicrobial peptide-6, found in Mesobuthus eupeus (Lesser Asian scorpion).